The chain runs to 159 residues: 2-C-methyl-D-erythritol 2,4-cyclodiphosphate synthase (159 aa).

Residues Asp-8 and His-10 each contribute to the a divalent metal cation site. Residues 8-10 and 34-35 contribute to the 4-CDP-2-C-methyl-D-erythritol 2-phosphate site; these read DVH and HS. His-42 serves as a coordination point for a divalent metal cation. Residues 56–58, 61–65, 100–106, 132–135, Phe-139, and Arg-142 contribute to the 4-CDP-2-C-methyl-D-erythritol 2-phosphate site; these read DIG, FPDTD, AQAPKML, and TTTE.

This sequence belongs to the IspF family. Homotrimer. A divalent metal cation serves as cofactor.

It carries out the reaction 4-CDP-2-C-methyl-D-erythritol 2-phosphate = 2-C-methyl-D-erythritol 2,4-cyclic diphosphate + CMP. It participates in isoprenoid biosynthesis; isopentenyl diphosphate biosynthesis via DXP pathway; isopentenyl diphosphate from 1-deoxy-D-xylulose 5-phosphate: step 4/6. Its function is as follows. Involved in the biosynthesis of isopentenyl diphosphate (IPP) and dimethylallyl diphosphate (DMAPP), two major building blocks of isoprenoid compounds. Catalyzes the conversion of 4-diphosphocytidyl-2-C-methyl-D-erythritol 2-phosphate (CDP-ME2P) to 2-C-methyl-D-erythritol 2,4-cyclodiphosphate (ME-CPP) with a corresponding release of cytidine 5-monophosphate (CMP). This is 2-C-methyl-D-erythritol 2,4-cyclodiphosphate synthase from Salmonella arizonae (strain ATCC BAA-731 / CDC346-86 / RSK2980).